Consider the following 314-residue polypeptide: MNAIWIDEQLETSARVQNSMKIEREDHKLEKRLCREVGRAIVDFNMIEEGDKVMVCVSGGKDSYAMLDILLKLQKRAPINFELVAVNLDQKQPGFPEHVLPEYLSKLGVPYHIENQDTYSIVTRVIPEGKTLCSLCSRLRRGILYRVAGELGCTKIALGHHRDDMLQTFFLNMFFAAKLKGMPPKLVSDDGKNIVIRPMAYVTEKDLTRWAQVQDFPIIPCTLCGSQENLQRKQVGNMLRDWQKQYPGRIENMFSALQNIVPSHLMDSKRHDFKGIRTTGVADPEGDKAFDAEEFMQAAPAGRAVIGINPLAPG.

Positions 58 to 63 (SGGKDS) match the PP-loop motif motif. Cys133, Cys136, and Cys224 together coordinate [4Fe-4S] cluster.

It belongs to the TtcA family. Homodimer. Mg(2+) serves as cofactor. It depends on [4Fe-4S] cluster as a cofactor.

The protein localises to the cytoplasm. It catalyses the reaction cytidine(32) in tRNA + S-sulfanyl-L-cysteinyl-[cysteine desulfurase] + AH2 + ATP = 2-thiocytidine(32) in tRNA + L-cysteinyl-[cysteine desulfurase] + A + AMP + diphosphate + H(+). It participates in tRNA modification. Functionally, catalyzes the ATP-dependent 2-thiolation of cytidine in position 32 of tRNA, to form 2-thiocytidine (s(2)C32). The sulfur atoms are provided by the cysteine/cysteine desulfurase (IscS) system. This is tRNA-cytidine(32) 2-sulfurtransferase from Polaromonas naphthalenivorans (strain CJ2).